A 282-amino-acid polypeptide reads, in one-letter code: ATP synthase gamma chain (282 aa).

Belongs to the ATPase gamma chain family. In terms of assembly, F-type ATPases have 2 components, CF(1) - the catalytic core - and CF(0) - the membrane proton channel. CF(1) has five subunits: alpha(3), beta(3), gamma(1), delta(1), epsilon(1). CF(0) has three main subunits: a, b and c. In this bacterium the a and b subunits are transcribed but do not seem to be translated, thus the ATP synthase consists of the alpha, beta, gamma, delta, epsilon and c subunits.

The protein localises to the cell membrane. Functionally, produces ATP from ADP in the presence of a proton gradient across the membrane. The gamma chain is believed to be important in regulating ATPase activity and the flow of protons through the CF(0) complex. This Moorella thermoacetica (strain ATCC 39073 / JCM 9320) protein is ATP synthase gamma chain.